The following is a 337-amino-acid chain: Holliday junction branch migration complex subunit RuvB (337 aa).

The tract at residues 1-180 (MTRLISADKS…FGVISRLEFY (180 aa)) is large ATPase domain (RuvB-L). ATP-binding positions include leucine 19, arginine 20, glycine 61, lysine 64, threonine 65, threonine 66, 127–129 (EDF), arginine 170, tyrosine 180, and arginine 217. Threonine 65 is a binding site for Mg(2+). The tract at residues 181 to 251 (THDELAFIIT…VADQALALLE (71 aa)) is small ATPAse domain (RuvB-S). A head domain (RuvB-H) region spans residues 254-337 (EMGFDMMDRA…APEPPQGKLF (84 aa)). DNA contacts are provided by arginine 309 and arginine 314.

This sequence belongs to the RuvB family. As to quaternary structure, homohexamer. Forms an RuvA(8)-RuvB(12)-Holliday junction (HJ) complex. HJ DNA is sandwiched between 2 RuvA tetramers; dsDNA enters through RuvA and exits via RuvB. An RuvB hexamer assembles on each DNA strand where it exits the tetramer. Each RuvB hexamer is contacted by two RuvA subunits (via domain III) on 2 adjacent RuvB subunits; this complex drives branch migration. In the full resolvosome a probable DNA-RuvA(4)-RuvB(12)-RuvC(2) complex forms which resolves the HJ.

The protein resides in the cytoplasm. The catalysed reaction is ATP + H2O = ADP + phosphate + H(+). The RuvA-RuvB-RuvC complex processes Holliday junction (HJ) DNA during genetic recombination and DNA repair, while the RuvA-RuvB complex plays an important role in the rescue of blocked DNA replication forks via replication fork reversal (RFR). RuvA specifically binds to HJ cruciform DNA, conferring on it an open structure. The RuvB hexamer acts as an ATP-dependent pump, pulling dsDNA into and through the RuvAB complex. RuvB forms 2 homohexamers on either side of HJ DNA bound by 1 or 2 RuvA tetramers; 4 subunits per hexamer contact DNA at a time. Coordinated motions by a converter formed by DNA-disengaged RuvB subunits stimulates ATP hydrolysis and nucleotide exchange. Immobilization of the converter enables RuvB to convert the ATP-contained energy into a lever motion, pulling 2 nucleotides of DNA out of the RuvA tetramer per ATP hydrolyzed, thus driving DNA branch migration. The RuvB motors rotate together with the DNA substrate, which together with the progressing nucleotide cycle form the mechanistic basis for DNA recombination by continuous HJ branch migration. Branch migration allows RuvC to scan DNA until it finds its consensus sequence, where it cleaves and resolves cruciform DNA. This chain is Holliday junction branch migration complex subunit RuvB, found in Geobacter sp. (strain M21).